The primary structure comprises 63 residues: KDGYPMRSDGCTIACLFDNDFCNRKCVEQKGKSGYCYFWKQSCYCEGLPDDKVYDSATSKCRA.

The LCN-type CS-alpha/beta domain maps to 1–62 (KDGYPMRSDG…VYDSATSKCR (62 aa)). Intrachain disulfides connect cysteine 11-cysteine 61, cysteine 15-cysteine 36, cysteine 22-cysteine 43, and cysteine 26-cysteine 45.

This sequence belongs to the long (4 C-C) scorpion toxin superfamily. Sodium channel inhibitor family. Beta subfamily. Expressed by the venom gland.

The protein resides in the secreted. In terms of biological role, beta toxins bind sodium channels (Nav) and shift the voltage of activation towards more negative potentials thereby affecting sodium channel activation and promoting spontaneous and repetitive firing. Only when tested on grasshopper mouse channels, this toxin inhibits Nav1.8/SCN10A sodium currents in a concentration and voltage-dependent manner (IC(50)=680 nM). This toxin hyperpolarizes the voltage dependence of Nav1.8/SCN10A activation, as well as steady-state fast inactivation and slow inactivation. In contrast to most beta scorpion toxins, this toxin inhibits grasshopper mouse Nav1.8/SCN10A currents through modulation of the domain I S4 voltage sensor, and the domain II second S5-S6 extracellular pore loop. This Centruroides sculpturatus (Arizona bark scorpion) protein is Beta-toxin NaTx36.